A 443-amino-acid polypeptide reads, in one-letter code: Phosphoglucosamine mutase (443 aa).

Catalysis depends on Ser-101, which acts as the Phosphoserine intermediate. Residues Ser-101, Asp-239, Asp-241, and Asp-243 each coordinate Mg(2+). The residue at position 101 (Ser-101) is a Phosphoserine.

It belongs to the phosphohexose mutase family. The cofactor is Mg(2+). Activated by phosphorylation.

It carries out the reaction alpha-D-glucosamine 1-phosphate = D-glucosamine 6-phosphate. Functionally, catalyzes the conversion of glucosamine-6-phosphate to glucosamine-1-phosphate. The chain is Phosphoglucosamine mutase from Francisella tularensis subsp. holarctica (strain FTNF002-00 / FTA).